The primary structure comprises 158 residues: Ribonuclease H (158 aa).

One can recognise an RNase H type-1 domain in the interval 3–144 (GLKQLLIFTD…CDTLAREAAE (142 aa)). Residues Asp12, Glu50, Asp72, and Asp136 each coordinate Mg(2+).

It belongs to the RNase H family. As to quaternary structure, monomer. The cofactor is Mg(2+).

The protein localises to the cytoplasm. It catalyses the reaction Endonucleolytic cleavage to 5'-phosphomonoester.. Functionally, endonuclease that specifically degrades the RNA of RNA-DNA hybrids. The chain is Ribonuclease H from Shewanella loihica (strain ATCC BAA-1088 / PV-4).